The sequence spans 172 residues: C-phycocyanin beta chain (172 aa).

An N4-methylasparagine modification is found at asparagine 72. Residues cysteine 82 and cysteine 153 each coordinate (2R,3E)-phycocyanobilin.

Belongs to the phycobiliprotein family. As to quaternary structure, heterodimer of an alpha and a beta subunit, which further assembles into trimers and the trimers into hexamers. The basic functional unit of phycobiliproteins is a ring-shaped hexamer formed from two back-to-back trimers contacting via the alpha chain subunits. The trimers are composed of alpha/beta subunit heterodimers arranged around a three-fold axis of symmetry. The phycoerythrins also contain a gamma subunit which is located in the center of the hexamer. In terms of processing, contains two covalently linked bilin chromophores.

It localises to the plastid. Its subcellular location is the chloroplast thylakoid membrane. Its function is as follows. Light-harvesting photosynthetic bile pigment-protein from the phycobiliprotein complex (phycobilisome, PBS). Phycocyanin is the major phycobiliprotein in the PBS rod. This is C-phycocyanin beta chain (cpcB) from Porphyra purpurea (Red seaweed).